We begin with the raw amino-acid sequence, 142 residues long: Extracellular globin-1 (142 aa).

Residues 1-142 (ECLVTEGLKV…DQIIDGIKDI (142 aa)) enclose the Globin domain. Cysteine 2 and cysteine 131 are disulfide-bonded. Histidine 94 serves as a coordination point for heme b.

It belongs to the globin family. The extracellular hemoglobin of the earthworm consists of 12 subunits that have a hexagonal bilayer structure with a molecular weight near 3.8 million. Each one-twelfth subunit is composed primarily of disulfide linked trimers (chains A, B, and C) and monomers (chain D).

The polypeptide is Extracellular globin-1 (Lumbricus terrestris (Common earthworm)).